Reading from the N-terminus, the 125-residue chain is Calcitonin gene-related peptide 1 (125 aa).

An N-terminal signal peptide occupies residues 1–25 (MVMLKISSFLAVYALVVCQMDSFQA). Residues 26 to 77 (APVRPGLESITDRVTLSDYEARRLLNALVKDFIQMTAEELEQASEGNSVTAQ) constitute a propeptide that is removed on maturation. A disulfide bridge links cysteine 81 with cysteine 86. The residue at position 116 (phenylalanine 116) is a Phenylalanine amide. The propeptide occupies 122 to 125 (SVQI).

Belongs to the calcitonin family.

Its subcellular location is the secreted. In terms of biological role, CGRP1/CALCA is a peptide hormone that induces vasodilation mediated by the CALCRL-RAMP1 receptor complex. Dilates a variety of vessels including the coronary, cerebral and systemic vasculature. Its abundance in the CNS also points toward a neurotransmitter or neuromodulator role. It also elevates platelet cAMP. CGRP1 can also bind and activate CALCR-RAMP1 (AMYR1) receptor complex. This chain is Calcitonin gene-related peptide 1 (CALCA), found in Gallus gallus (Chicken).